The chain runs to 631 residues: Glutamyl-tRNA(Gln) amidotransferase subunit E (631 aa).

It belongs to the GatB/GatE family. GatE subfamily. As to quaternary structure, heterodimer of GatD and GatE.

The catalysed reaction is L-glutamyl-tRNA(Gln) + L-glutamine + ATP + H2O = L-glutaminyl-tRNA(Gln) + L-glutamate + ADP + phosphate + H(+). Allows the formation of correctly charged Gln-tRNA(Gln) through the transamidation of misacylated Glu-tRNA(Gln) in organisms which lack glutaminyl-tRNA synthetase. The reaction takes place in the presence of glutamine and ATP through an activated gamma-phospho-Glu-tRNA(Gln). The GatDE system is specific for glutamate and does not act on aspartate. This is Glutamyl-tRNA(Gln) amidotransferase subunit E from Methanococcus maripaludis (strain C6 / ATCC BAA-1332).